A 229-amino-acid polypeptide reads, in one-letter code: Putative N-acetylmannosamine-6-phosphate 2-epimerase (229 aa).

It belongs to the NanE family.

The catalysed reaction is an N-acyl-D-glucosamine 6-phosphate = an N-acyl-D-mannosamine 6-phosphate. It functions in the pathway amino-sugar metabolism; N-acetylneuraminate degradation; D-fructose 6-phosphate from N-acetylneuraminate: step 3/5. Its function is as follows. Converts N-acetylmannosamine-6-phosphate (ManNAc-6-P) to N-acetylglucosamine-6-phosphate (GlcNAc-6-P). The sequence is that of Putative N-acetylmannosamine-6-phosphate 2-epimerase from Escherichia coli O127:H6 (strain E2348/69 / EPEC).